Reading from the N-terminus, the 379-residue chain is Cytochrome b (379 aa).

A run of 4 helical transmembrane segments spans residues phenylalanine 32–methionine 52, tryptophan 76–isoleucine 97, tryptophan 112–leucine 132, and phenylalanine 177–leucine 197. Histidine 82 and histidine 96 together coordinate heme b. Histidine 181 and histidine 195 together coordinate heme b. Histidine 200 contacts a ubiquinone. Helical transmembrane passes span tyrosine 225–serine 245, leucine 287–histidine 307, leucine 319–glycine 339, and phenylalanine 346–proline 366.

It belongs to the cytochrome b family. The cytochrome bc1 complex contains 3 respiratory subunits (MT-CYB, CYC1 and UQCRFS1), 2 core proteins (UQCRC1 and UQCRC2) and probably 6 low-molecular weight proteins. The cofactor is heme b.

Its subcellular location is the mitochondrion inner membrane. Its function is as follows. Component of the ubiquinol-cytochrome c reductase complex (complex III or cytochrome b-c1 complex) that is part of the mitochondrial respiratory chain. The b-c1 complex mediates electron transfer from ubiquinol to cytochrome c. Contributes to the generation of a proton gradient across the mitochondrial membrane that is then used for ATP synthesis. The chain is Cytochrome b (mt-cyb) from Chlorophthalmus agassizi (Shortnose greeneye).